The primary structure comprises 454 residues: Aspartate aminotransferase P2, mitochondrial (454 aa).

The N-terminal 49 residues, Ser1–Val49, are a transit peptide targeting the mitochondrion. L-aspartate is bound by residues Gly86, Trp182, and Asn235. Lys299 is subject to N6-(pyridoxal phosphate)lysine. Arg428 serves as a coordination point for L-aspartate.

Belongs to the class-I pyridoxal-phosphate-dependent aminotransferase family. In terms of assembly, homodimer. Pyridoxal 5'-phosphate serves as cofactor.

It localises to the mitochondrion matrix. It catalyses the reaction L-aspartate + 2-oxoglutarate = oxaloacetate + L-glutamate. Important for the metabolism of amino acids and Krebs-cycle related organic acids. In plants, it is involved in nitrogen metabolism and in aspects of carbon and energy metabolism. The chain is Aspartate aminotransferase P2, mitochondrial from Lupinus angustifolius (Narrow-leaved blue lupine).